The sequence spans 1050 residues: Valine--tRNA ligase (1050 aa).

Residues 37-57 (EKKAAASDKPVKEAKAKKEQT) are compositionally biased toward basic and acidic residues. The segment at 37–72 (EKKAAASDKPVKEAKAKKEQTVEAAEPVDQTPTGQR) is disordered. The 'HIGH' region motif lies at 127–137 (PNVTGNLHVGH). The 'KMSKS' region motif lies at 642–646 (KMSKS). Lysine 645 contributes to the ATP binding site.

Belongs to the class-I aminoacyl-tRNA synthetase family.

It carries out the reaction tRNA(Val) + L-valine + ATP = L-valyl-tRNA(Val) + AMP + diphosphate. The protein is Valine--tRNA ligase of Caenorhabditis elegans.